A 322-amino-acid chain; its full sequence is tRNA uridine(34) hydroxylase (322 aa).

The region spanning 126–220 (LAEDTVVIDA…YGKDPEVKGE (95 aa)) is the Rhodanese domain. Cysteine 180 functions as the Cysteine persulfide intermediate in the catalytic mechanism.

The protein belongs to the TrhO family.

The enzyme catalyses uridine(34) in tRNA + AH2 + O2 = 5-hydroxyuridine(34) in tRNA + A + H2O. In terms of biological role, catalyzes oxygen-dependent 5-hydroxyuridine (ho5U) modification at position 34 in tRNAs. This chain is tRNA uridine(34) hydroxylase, found in Shouchella clausii (strain KSM-K16) (Alkalihalobacillus clausii).